We begin with the raw amino-acid sequence, 312 residues long: tRNA pseudouridine synthase B (312 aa).

Residue Asp48 is the Nucleophile of the active site.

It belongs to the pseudouridine synthase TruB family. Type 1 subfamily.

The catalysed reaction is uridine(55) in tRNA = pseudouridine(55) in tRNA. Responsible for synthesis of pseudouridine from uracil-55 in the psi GC loop of transfer RNAs. The polypeptide is tRNA pseudouridine synthase B (Haemophilus influenzae (strain ATCC 51907 / DSM 11121 / KW20 / Rd)).